A 198-amino-acid chain; its full sequence is Small ribosomal subunit protein uS4 (198 aa).

Residues 90 to 152 (TRLDNLVLRA…SRSNELFKEN (63 aa)) enclose the S4 RNA-binding domain.

This sequence belongs to the universal ribosomal protein uS4 family. As to quaternary structure, part of the 30S ribosomal subunit. Contacts protein S5. The interaction surface between S4 and S5 is involved in control of translational fidelity.

Its function is as follows. One of the primary rRNA binding proteins, it binds directly to 16S rRNA where it nucleates assembly of the body of the 30S subunit. With S5 and S12 plays an important role in translational accuracy. In Finegoldia magna (strain ATCC 29328 / DSM 20472 / WAL 2508) (Peptostreptococcus magnus), this protein is Small ribosomal subunit protein uS4.